We begin with the raw amino-acid sequence, 197 residues long: Probable chorismate pyruvate-lyase (197 aa).

The segment covering 1–14 (MRFDAADAHWRETP) has biased composition (basic and acidic residues). Positions 1–25 (MRFDAADAHWRETPRPGASGAQKDW) are disordered. The substrate site is built by arginine 73, leucine 111, and glutamate 173.

It belongs to the UbiC family.

Its subcellular location is the cytoplasm. It catalyses the reaction chorismate = 4-hydroxybenzoate + pyruvate. It participates in cofactor biosynthesis; ubiquinone biosynthesis. Its function is as follows. Removes the pyruvyl group from chorismate, with concomitant aromatization of the ring, to provide 4-hydroxybenzoate (4HB) for the ubiquinone pathway. The chain is Probable chorismate pyruvate-lyase from Burkholderia thailandensis (strain ATCC 700388 / DSM 13276 / CCUG 48851 / CIP 106301 / E264).